Here is a 55-residue protein sequence, read N- to C-terminus: Neurotoxin BmP08 (55 aa).

The signal sequence occupies residues 1-23 (MKIFFAVLVILVLFSMLIWTAYG). Disulfide bonds link cysteine 30–cysteine 45, cysteine 36–cysteine 50, and cysteine 39–cysteine 53.

As to expression, expressed by the venom gland.

Its subcellular location is the secreted. The chain is Neurotoxin BmP08 from Olivierus martensii (Manchurian scorpion).